Reading from the N-terminus, the 240-residue chain is Glutathione S-transferase omega-1 (240 aa).

An N-acetylserine modification is found at Ser-2. A GST N-terminal domain is found at 22–101 (GQIRVYSMRF…YLDEAYPEKK (80 aa)). Cys-32 (nucleophile) is an active-site residue. Lys-57 carries the N6-acetyllysine modification. Glutathione contacts are provided by residues Lys-59, Val-72, and 85 to 86 (ES). The GST C-terminal domain occupies 106 to 227 (DPYKKARQKM…AKTYREYLNL (122 aa)). Residue Ser-129 is modified to Phosphoserine. An N6-acetyllysine modification is found at Lys-152.

It belongs to the GST superfamily. Omega family. Homodimer.

It localises to the cytoplasm. The protein localises to the cytosol. It carries out the reaction RX + glutathione = an S-substituted glutathione + a halide anion + H(+). The catalysed reaction is L-dehydroascorbate + 2 glutathione = glutathione disulfide + L-ascorbate. The enzyme catalyses methylarsonate + 2 glutathione + H(+) = methylarsonous acid + glutathione disulfide + H2O. Its function is as follows. Exhibits glutathione-dependent thiol transferase and dehydroascorbate reductase activities. Has S-(phenacyl)glutathione reductase activity. Also has glutathione S-transferase activity. Participates in the biotransformation of inorganic arsenic and reduces monomethylarsonic acid (MMA) and dimethylarsonic acid. This chain is Glutathione S-transferase omega-1 (Gsto1), found in Mus musculus (Mouse).